The chain runs to 119 residues: Large ribosomal subunit protein bL20 (119 aa).

It belongs to the bacterial ribosomal protein bL20 family.

Its function is as follows. Binds directly to 23S ribosomal RNA and is necessary for the in vitro assembly process of the 50S ribosomal subunit. It is not involved in the protein synthesizing functions of that subunit. This chain is Large ribosomal subunit protein bL20, found in Clostridium kluyveri (strain NBRC 12016).